Reading from the N-terminus, the 452-residue chain is Probable ECA polymerase (452 aa).

Helical transmembrane passes span 6 to 26 (FSGL…LTWF), 37 to 57 (VFFS…TSVL), 63 to 83 (VGVA…CFYG), 118 to 138 (VILM…NGFL), 155 to 175 (GVAL…VYFL), 181 to 201 (AWLF…MIVG), 207 to 227 (IIIA…ISLW), 228 to 248 (MLAA…LKRY), 341 to 361 (LVVM…GLII), 378 to 398 (YKAA…IVLA), and 410 to 430 (VFFL…FWLF).

The protein belongs to the WzyE family. In terms of assembly, probably part of a complex composed of WzxE, WzyE and WzzE.

Its subcellular location is the cell inner membrane. Its pathway is bacterial outer membrane biogenesis; enterobacterial common antigen biosynthesis. Its function is as follows. Probably involved in the polymerization of enterobacterial common antigen (ECA) trisaccharide repeat units. The polypeptide is Probable ECA polymerase (Salmonella heidelberg (strain SL476)).